Consider the following 115-residue polypeptide: U3-lycotoxin-Ls1k (115 aa).

Residues 1–20 form the signal peptide; the sequence is MKFELLFGVLLVTLFSYSSA. Positions 21–44 are excised as a propeptide; the sequence is EMLDDFDQADEDELLSLIEKEEAR. 4 disulfide bridges follow: Cys-48-Cys-63, Cys-55-Cys-72, Cys-62-Cys-87, and Cys-74-Cys-85.

The protein belongs to the neurotoxin 19 (CSTX) family. 01 subfamily. Expressed by the venom gland.

Its subcellular location is the secreted. The polypeptide is U3-lycotoxin-Ls1k (Lycosa singoriensis (Wolf spider)).